The chain runs to 157 residues: SsrA-binding protein (157 aa).

Belongs to the SmpB family.

The protein localises to the cytoplasm. Functionally, required for rescue of stalled ribosomes mediated by trans-translation. Binds to transfer-messenger RNA (tmRNA), required for stable association of tmRNA with ribosomes. tmRNA and SmpB together mimic tRNA shape, replacing the anticodon stem-loop with SmpB. tmRNA is encoded by the ssrA gene; the 2 termini fold to resemble tRNA(Ala) and it encodes a 'tag peptide', a short internal open reading frame. During trans-translation Ala-aminoacylated tmRNA acts like a tRNA, entering the A-site of stalled ribosomes, displacing the stalled mRNA. The ribosome then switches to translate the ORF on the tmRNA; the nascent peptide is terminated with the 'tag peptide' encoded by the tmRNA and targeted for degradation. The ribosome is freed to recommence translation, which seems to be the essential function of trans-translation. The chain is SsrA-binding protein from Methylobacterium nodulans (strain LMG 21967 / CNCM I-2342 / ORS 2060).